The chain runs to 158 residues: MATVDHREAGQDDPESEDEVYEVVDLTEYARRHQWWSRVFGSNSGPIAEKYSVTTQLVMGGLTGWCAGYLFQRVGKIAATAVGGGFLLLQIANHSGYVQVDWKKVEKDVNKAKKRLKKKANKAVPEINTLIEEATDFIKKNIVLSGGFVGGFLLGLAS.

The YXXL motif lies at 21-24 (YEVV). The next 2 helical transmembrane spans lie at 51–70 (YSVTTQLVMGGLTGWCAGYL) and 77–98 (IAATAVGGGFLLLQIANHSGYV).

The protein belongs to the FUN14 family.

It localises to the mitochondrion outer membrane. Functionally, acts as an activator of hypoxia-induced mitophagy, an important mechanism for mitochondrial quality control. This Tetraodon nigroviridis (Spotted green pufferfish) protein is FUN14 domain-containing protein 1 (fundc1).